The chain runs to 268 residues: Indole-3-glycerol phosphate synthase (268 aa).

The protein belongs to the TrpC family.

It catalyses the reaction 1-(2-carboxyphenylamino)-1-deoxy-D-ribulose 5-phosphate + H(+) = (1S,2R)-1-C-(indol-3-yl)glycerol 3-phosphate + CO2 + H2O. It participates in amino-acid biosynthesis; L-tryptophan biosynthesis; L-tryptophan from chorismate: step 4/5. The sequence is that of Indole-3-glycerol phosphate synthase from Acinetobacter baumannii (strain SDF).